The primary structure comprises 510 residues: Cobyric acid synthase (510 aa).

The region spanning 262-460 (EIKVGIIKLP…IHGIFENDEW (199 aa)) is the GATase cobBQ-type domain. Cys343 serves as the catalytic Nucleophile. His452 is a catalytic residue.

This sequence belongs to the CobB/CobQ family. CobQ subfamily.

The protein operates within cofactor biosynthesis; adenosylcobalamin biosynthesis. In terms of biological role, catalyzes amidations at positions B, D, E, and G on adenosylcobyrinic A,C-diamide. NH(2) groups are provided by glutamine, and one molecule of ATP is hydrogenolyzed for each amidation. The polypeptide is Cobyric acid synthase (Prochlorococcus marinus (strain MIT 9515)).